The chain runs to 231 residues: DNA repair protein RecO (231 aa).

This sequence belongs to the RecO family.

In terms of biological role, involved in DNA repair and RecF pathway recombination. This chain is DNA repair protein RecO, found in Coxiella burnetii (strain CbuK_Q154) (Coxiella burnetii (strain Q154)).